Here is a 190-residue protein sequence, read N- to C-terminus: Holliday junction branch migration complex subunit RuvA (190 aa).

Residues 1 to 63 are domain I; sequence MLDFIKGKVI…EESIEIYGFL (63 aa). The segment at 64 to 139 is domain II; that stretch reads ESSERDLFEE…ILPSLQYEKD (76 aa). A region of interest (flexible linker) is located at residue D139. Residues 139 to 190 are domain III; the sequence is DQKYDDILSALLNLGYKRLEAKEVLDKIYNNEKDEATIIRESLSILAGKDGK.

This sequence belongs to the RuvA family. Homotetramer. Forms an RuvA(8)-RuvB(12)-Holliday junction (HJ) complex. HJ DNA is sandwiched between 2 RuvA tetramers; dsDNA enters through RuvA and exits via RuvB. An RuvB hexamer assembles on each DNA strand where it exits the tetramer. Each RuvB hexamer is contacted by two RuvA subunits (via domain III) on 2 adjacent RuvB subunits; this complex drives branch migration. In the full resolvosome a probable DNA-RuvA(4)-RuvB(12)-RuvC(2) complex forms which resolves the HJ.

Its subcellular location is the cytoplasm. The RuvA-RuvB-RuvC complex processes Holliday junction (HJ) DNA during genetic recombination and DNA repair, while the RuvA-RuvB complex plays an important role in the rescue of blocked DNA replication forks via replication fork reversal (RFR). RuvA specifically binds to HJ cruciform DNA, conferring on it an open structure. The RuvB hexamer acts as an ATP-dependent pump, pulling dsDNA into and through the RuvAB complex. HJ branch migration allows RuvC to scan DNA until it finds its consensus sequence, where it cleaves and resolves the cruciform DNA. This chain is Holliday junction branch migration complex subunit RuvA, found in Thermodesulfovibrio yellowstonii (strain ATCC 51303 / DSM 11347 / YP87).